Here is a 276-residue protein sequence, read N- to C-terminus: NH(3)-dependent NAD(+) synthetase (276 aa).

An ATP-binding site is contributed by 43–50 (GISGGVDS). D49 contacts Mg(2+). Deamido-NAD(+) is bound at residue R146. T166 serves as a coordination point for ATP. E171 lines the Mg(2+) pocket. Deamido-NAD(+) contacts are provided by K179 and D186. Positions 195 and 217 each coordinate ATP. Residue 266–267 (HK) coordinates deamido-NAD(+).

Belongs to the NAD synthetase family. As to quaternary structure, homodimer.

It catalyses the reaction deamido-NAD(+) + NH4(+) + ATP = AMP + diphosphate + NAD(+) + H(+). Its pathway is cofactor biosynthesis; NAD(+) biosynthesis; NAD(+) from deamido-NAD(+) (ammonia route): step 1/1. Catalyzes the ATP-dependent amidation of deamido-NAD to form NAD. Uses ammonia as a nitrogen source. This chain is NH(3)-dependent NAD(+) synthetase, found in Aliivibrio salmonicida (strain LFI1238) (Vibrio salmonicida (strain LFI1238)).